The primary structure comprises 387 residues: GTP-binding protein 10 (387 aa).

Residues 13–148 (GNFIDKLRLF…RIIHLDLKLI (136 aa)) form the Obg domain. In terms of domain architecture, OBG-type G spans 149 to 344 (ADVGLVGFPN…LKNCIRKSLD (196 aa)). Residues 155–162 (GFPNAGKS), 202–206 (DLPGL), and 278–281 (NKMD) each bind GTP.

This sequence belongs to the TRAFAC class OBG-HflX-like GTPase superfamily. OBG GTPase family.

Its subcellular location is the nucleus. The protein resides in the nucleolus. The protein localises to the chromosome. Functionally, may be involved in the ribosome maturation process. Complements an ObgE(CgtA) function in E.coli ribosome maturation. Plays a role of GTPase in vitro. When missing, disorganization of the nucleolar architecture is observed. The sequence is that of GTP-binding protein 10 (GTPBP10) from Homo sapiens (Human).